We begin with the raw amino-acid sequence, 112 residues long: Integration host factor subunit alpha (112 aa).

It belongs to the bacterial histone-like protein family. Heterodimer of an alpha and a beta chain.

Its function is as follows. This protein is one of the two subunits of integration host factor, a specific DNA-binding protein that functions in genetic recombination as well as in transcriptional and translational control. This Rhizobium rhizogenes (strain K84 / ATCC BAA-868) (Agrobacterium radiobacter) protein is Integration host factor subunit alpha.